Here is a 271-residue protein sequence, read N- to C-terminus: 4-hydroxy-tetrahydrodipicolinate reductase (271 aa).

Residues 11–16 (GAAGRM), glutamate 37, 102–104 (GTT), and 126–129 (AGNM) contribute to the NAD(+) site. Histidine 159 acts as the Proton donor/acceptor in catalysis. Histidine 160 is a (S)-2,3,4,5-tetrahydrodipicolinate binding site. Lysine 163 serves as the catalytic Proton donor. 169-170 (GT) lines the (S)-2,3,4,5-tetrahydrodipicolinate pocket.

This sequence belongs to the DapB family.

It localises to the cytoplasm. It catalyses the reaction (S)-2,3,4,5-tetrahydrodipicolinate + NAD(+) + H2O = (2S,4S)-4-hydroxy-2,3,4,5-tetrahydrodipicolinate + NADH + H(+). The catalysed reaction is (S)-2,3,4,5-tetrahydrodipicolinate + NADP(+) + H2O = (2S,4S)-4-hydroxy-2,3,4,5-tetrahydrodipicolinate + NADPH + H(+). It functions in the pathway amino-acid biosynthesis; L-lysine biosynthesis via DAP pathway; (S)-tetrahydrodipicolinate from L-aspartate: step 4/4. Functionally, catalyzes the conversion of 4-hydroxy-tetrahydrodipicolinate (HTPA) to tetrahydrodipicolinate. The protein is 4-hydroxy-tetrahydrodipicolinate reductase of Parvibaculum lavamentivorans (strain DS-1 / DSM 13023 / NCIMB 13966).